A 675-amino-acid polypeptide reads, in one-letter code: DNA gyrase subunit B (675 aa).

Positions 453 to 567 (SELYVVEGDS…NGHVFLAQPP (115 aa)) constitute a Toprim domain. Residues Glu459, Asp532, and Asp534 each contribute to the Mg(2+) site.

It belongs to the type II topoisomerase GyrB family. Heterotetramer, composed of two GyrA and two GyrB chains. In the heterotetramer, GyrA contains the active site tyrosine that forms a transient covalent intermediate with DNA, while GyrB binds cofactors and catalyzes ATP hydrolysis. The cofactor is Mg(2+). Mn(2+) serves as cofactor. It depends on Ca(2+) as a cofactor.

The protein localises to the cytoplasm. The catalysed reaction is ATP-dependent breakage, passage and rejoining of double-stranded DNA.. Its function is as follows. A type II topoisomerase that negatively supercoils closed circular double-stranded (ds) DNA in an ATP-dependent manner to modulate DNA topology and maintain chromosomes in an underwound state. Negative supercoiling favors strand separation, and DNA replication, transcription, recombination and repair, all of which involve strand separation. Also able to catalyze the interconversion of other topological isomers of dsDNA rings, including catenanes and knotted rings. Type II topoisomerases break and join 2 DNA strands simultaneously in an ATP-dependent manner. This is DNA gyrase subunit B from Mycobacterium tuberculosis (strain ATCC 25177 / H37Ra).